The primary structure comprises 582 residues: Regulatory solute carrier protein family 1 member 1 (582 aa).

8 disordered regions span residues 1 to 32 (MSSL…ARSV), 56 to 76 (KASA…LQVL), 143 to 180 (EKSW…VPQD), 303 to 325 (VDMS…HGQP), 363 to 384 (VTCQ…SGRR), 390 to 409 (LTPS…SESG), 426 to 452 (ASTS…ESAR), and 483 to 529 (SEGA…LSTP). A compositionally biased stretch (polar residues) spans 16–32 (SGQSPEVGSPTSLARSV). Over residues 148–179 (PENQTPSPVNGLQQHRETGSVQREAGQQSVPQ) the composition is skewed to polar residues. Over residues 390–408 (LTPSDQYSQGSCHQATSES) the composition is skewed to polar residues. Composition is skewed to basic and acidic residues over residues 438 to 452 (SPDR…ESAR) and 490 to 503 (PSEH…DRPE). The UBA domain occupies 536–576 (IFPAADVDRILGAGFTLQEALGALHRVGGNADLALLVLLAK).

Interacts with YRDC. As to expression, expressed in epithelial and subepithelial cells of small intestine.

It is found in the cell membrane. The protein localises to the nucleus. It localises to the golgi apparatus. The protein resides in the trans-Golgi network. Functionally, mediates transcriptional and post-transcriptional regulation of SLC5A1. Inhibits a dynamin and PKC-dependent exocytotic pathway of SLC5A1. Also involved in transcriptional regulation of SLC22A2. Exhibits glucose-dependent, short-term inhibition of SLC5A1 and SLC22A2 by inhibiting the release of vesicles from the trans-Golgi network. Regulates the expression of SLC5A1 in a tissue-specific manner and is specifically involved in its regulation in the small intestine. In Mus musculus (Mouse), this protein is Regulatory solute carrier protein family 1 member 1 (Rsc1a1).